We begin with the raw amino-acid sequence, 272 residues long: Magnetosome protein MamQ (272 aa).

Residues 1 to 46 (MAVSDADASSVDKVESITLQRVKQSEELLAQLYVVEESPRRMGRGP) are Cytoplasmic-facing. A helical membrane pass occupies residues 47–67 (VQLMLAISVLSLVAFITTLLM). The Lumenal segment spans residues 68–272 (RYNAFVTMYE…PLTHSQESKN (205 aa)).

The protein belongs to the LemA family.

The protein resides in the magnetosome membrane. The protein localises to the cell inner membrane. Essential for magnetosome formation. Not essential for formation of magnetosome membrane vesicles. One of 7 genes (mamLQBIEMO) able to induce magnetosome membrane biogenesis; coexpression of mamLQRBIEMO in a deletion of the 17 gene mamAB operon restores magnetosome vesicle formation but not magnetite biosynthesis. The polypeptide is Magnetosome protein MamQ (Magnetospirillum gryphiswaldense (strain DSM 6361 / JCM 21280 / NBRC 15271 / MSR-1)).